Reading from the N-terminus, the 378-residue chain is MNQADRALQASQARVYNFSAGPAVLPLEVLEQAKEEMVSWHGSGMSVMEMSHRGREFENILAAAFSDLRQLLAVPDNYEILFLQGGAIAENAIVPLNLMRRLSADAPKADYVVTGTWSVKSQQEARKYGEVNIAATSETERFHKIPDVSSWKLSSDAAYVHLCTNETIVGVEYQETPDVGQAHGRVVVSDVSSHILSRPIDWNGYQVLYGGAQKNIGPAGLTIAIVRKDLLGHAHPLCPSAFNWRLVAENGSMYNTPPTYAIYIAGLVFQWIKRQGGVEALETRNIIKSKMLYDFIDASSFYRNEIHPTCRSRMNVPFFLNDESRSEAFLAQARERGLVQLKGHKSVGGMRASIYNAMPLEGVEALVDFMREFERVSA.

Arg-53 serves as a coordination point for L-glutamate. Trp-117, Thr-167, Asp-190, and Gln-213 together coordinate pyridoxal 5'-phosphate. An N6-(pyridoxal phosphate)lysine modification is found at Lys-214. Position 255–256 (255–256 (NT)) interacts with pyridoxal 5'-phosphate.

This sequence belongs to the class-V pyridoxal-phosphate-dependent aminotransferase family. SerC subfamily. In terms of assembly, homodimer. It depends on pyridoxal 5'-phosphate as a cofactor.

It localises to the cytoplasm. It catalyses the reaction O-phospho-L-serine + 2-oxoglutarate = 3-phosphooxypyruvate + L-glutamate. The catalysed reaction is 4-(phosphooxy)-L-threonine + 2-oxoglutarate = (R)-3-hydroxy-2-oxo-4-phosphooxybutanoate + L-glutamate. Its pathway is amino-acid biosynthesis; L-serine biosynthesis; L-serine from 3-phospho-D-glycerate: step 2/3. It functions in the pathway cofactor biosynthesis; pyridoxine 5'-phosphate biosynthesis; pyridoxine 5'-phosphate from D-erythrose 4-phosphate: step 3/5. Catalyzes the reversible conversion of 3-phosphohydroxypyruvate to phosphoserine and of 3-hydroxy-2-oxo-4-phosphonooxybutanoate to phosphohydroxythreonine. This chain is Phosphoserine aminotransferase, found in Ralstonia pickettii (strain 12J).